The primary structure comprises 560 residues: Transcription termination factor 5, mitochondrial (560 aa).

The N-terminal 23 residues, 1-23 (MLRNGQNQAQLLARSLGQLARGM), are a transit peptide targeting the mitochondrion. The tract at residues 23–47 (MASSKRVSSKKEDLKPKLPKPPTVE) is disordered.

It belongs to the mTERF family. As to quaternary structure, probably binds to the mTTF-DNA complex.

The protein resides in the mitochondrion. Its function is as follows. Binds promoter DNA and regulates initiation of transcription. Regulates mitochondrial replication and transcription. Required for normal topology and maintenance of mitochondrial DNA (mtDNA) levels. Regulates mtDNA replication by re-activating replication after replication pausing. Likely to regulate replication pausing by coordinating with the mitochondrial termination factor mTTF which promotes replication pausing. Their function in replication pausing prevents unregulated replication that may occur for example by collisions between the machineries of DNA replication and transcription during mtDNA synthesis. This ensures the incorporation of RNA transcripts into replication intermediates at the replication fork and allows for proper fork progression. Possibly functions downstream of Dref which activates genes involved in mtDNA replication and maintenance. The polypeptide is Transcription termination factor 5, mitochondrial (Drosophila melanogaster (Fruit fly)).